A 579-amino-acid polypeptide reads, in one-letter code: Carboxysome shell carbonic anhydrase (579 aa).

The disordered stretch occupies residues 72–95; it reads GGGRVRSARDQRQPGWVRRDKGAT. A compositionally biased stretch (basic and acidic residues) spans 78–93; that stretch reads SARDQRQPGWVRRDKG. C240 provides a ligand contact to Zn(2+). D242 serves as the catalytic Proton acceptor. Residues H308 and C319 each coordinate Zn(2+).

It belongs to the beta-class carbonic anhydrase family. CsoSCA subfamily. As to quaternary structure, homodimer. Zn(2+) serves as cofactor.

The protein resides in the carboxysome. It catalyses the reaction hydrogencarbonate + H(+) = CO2 + H2O. With respect to regulation, inhibited by dithiothreitol, partially inhibited by acetatzolamide and cyanide. Functionally, reversible hydration of carbon dioxide. Essential for photosynthetic carbon dioxide fixation, supplies CO(2) to RuBisCO (ribulose bisphosphate carboxylase, cbbL-cbbS) in the carboxysome. The polypeptide is Carboxysome shell carbonic anhydrase (Parasynechococcus marenigrum (strain WH8102)).